Reading from the N-terminus, the 437-residue chain is GTPase Obg (437 aa).

The Obg domain maps to 2–161 (SDFIDRALIT…RELQLELKVI (160 aa)). One can recognise an OBG-type G domain in the interval 162 to 335 (ADVGLVGFPN…LQRRIVDILR (174 aa)). GTP is bound by residues 168–175 (GFPNAGKS), 193–197 (FTTLS), 214–217 (DIPG), 284–287 (NKTD), and 316–318 (SAA). Positions 175 and 195 each coordinate Mg(2+). Residues 355-433 (FSNIDPNDFW…IEKAELLWQD (79 aa)) form the OCT domain.

The protein belongs to the TRAFAC class OBG-HflX-like GTPase superfamily. OBG GTPase family. Monomer. It depends on Mg(2+) as a cofactor.

It is found in the cytoplasm. An essential GTPase which binds GTP, GDP and possibly (p)ppGpp with moderate affinity, with high nucleotide exchange rates and a fairly low GTP hydrolysis rate. Plays a role in control of the cell cycle, stress response, ribosome biogenesis and in those bacteria that undergo differentiation, in morphogenesis control. This Herpetosiphon aurantiacus (strain ATCC 23779 / DSM 785 / 114-95) protein is GTPase Obg.